The primary structure comprises 166 residues: Antibacterial peptide PMAP-36 (166 aa).

An N-terminal signal peptide occupies residues 1 to 29; sequence METQRASLCLGRWSLWLLLLGLVVPSASA. The propeptide occupies 30-129; the sequence is QALSYREAVL…LDINCDEIQS (100 aa). 2 disulfides stabilise this stretch: cysteine 85–cysteine 96 and cysteine 107–cysteine 124.

Belongs to the cathelicidin family.

It localises to the secreted. Functionally, exerts antimicrobial activity against both Gram-positive and negative bacteria. Its activity appears to be mediated by its ability to damage bacterial membranes. This Sus scrofa (Pig) protein is Antibacterial peptide PMAP-36 (PMAP36).